We begin with the raw amino-acid sequence, 321 residues long: Lipoyl synthase (321 aa).

[4Fe-4S] cluster contacts are provided by C68, C73, C79, C94, C98, C101, and S308. The region spanning F80–T297 is the Radical SAM core domain.

It belongs to the radical SAM superfamily. Lipoyl synthase family. Requires [4Fe-4S] cluster as cofactor.

The protein localises to the cytoplasm. The enzyme catalyses [[Fe-S] cluster scaffold protein carrying a second [4Fe-4S](2+) cluster] + N(6)-octanoyl-L-lysyl-[protein] + 2 oxidized [2Fe-2S]-[ferredoxin] + 2 S-adenosyl-L-methionine + 4 H(+) = [[Fe-S] cluster scaffold protein] + N(6)-[(R)-dihydrolipoyl]-L-lysyl-[protein] + 4 Fe(3+) + 2 hydrogen sulfide + 2 5'-deoxyadenosine + 2 L-methionine + 2 reduced [2Fe-2S]-[ferredoxin]. The protein operates within protein modification; protein lipoylation via endogenous pathway; protein N(6)-(lipoyl)lysine from octanoyl-[acyl-carrier-protein]: step 2/2. In terms of biological role, catalyzes the radical-mediated insertion of two sulfur atoms into the C-6 and C-8 positions of the octanoyl moiety bound to the lipoyl domains of lipoate-dependent enzymes, thereby converting the octanoylated domains into lipoylated derivatives. The polypeptide is Lipoyl synthase (Photorhabdus laumondii subsp. laumondii (strain DSM 15139 / CIP 105565 / TT01) (Photorhabdus luminescens subsp. laumondii)).